Here is a 284-residue protein sequence, read N- to C-terminus: Phosphonates import ATP-binding protein PhnC 1 (284 aa).

Positions 5-253 (IEVRGLSKSF…MLRDLYGSEA (249 aa)) constitute an ABC transporter domain. 38-45 (GASGSGKS) lines the ATP pocket.

Belongs to the ABC transporter superfamily. Phosphonates importer (TC 3.A.1.9.1) family. The complex is composed of two ATP-binding proteins (PhnC), two transmembrane proteins (PhnE) and a solute-binding protein (PhnD).

It localises to the cell inner membrane. It carries out the reaction phosphonate(out) + ATP + H2O = phosphonate(in) + ADP + phosphate + H(+). Functionally, part of the ABC transporter complex PhnCDE involved in phosphonates import. Responsible for energy coupling to the transport system. The sequence is that of Phosphonates import ATP-binding protein PhnC 1 from Cupriavidus metallidurans (strain ATCC 43123 / DSM 2839 / NBRC 102507 / CH34) (Ralstonia metallidurans).